Here is a 479-residue protein sequence, read N- to C-terminus: Glutamate--tRNA ligase (479 aa).

Positions 21-31 match the 'HIGH' region motif; that stretch reads PSPTGYLHVGG. The 'KMSKS' region motif lies at 248-252; it reads KLSKR. An ATP-binding site is contributed by Lys251.

Belongs to the class-I aminoacyl-tRNA synthetase family. Glutamate--tRNA ligase type 1 subfamily. Monomer.

Its subcellular location is the cytoplasm. It carries out the reaction tRNA(Glu) + L-glutamate + ATP = L-glutamyl-tRNA(Glu) + AMP + diphosphate. Catalyzes the attachment of glutamate to tRNA(Glu) in a two-step reaction: glutamate is first activated by ATP to form Glu-AMP and then transferred to the acceptor end of tRNA(Glu). The polypeptide is Glutamate--tRNA ligase (Actinobacillus pleuropneumoniae serotype 7 (strain AP76)).